A 281-amino-acid chain; its full sequence is NAC domain-containing protein 6 (281 aa).

One can recognise an NAC domain in the interval Leu4–Gln156. Disordered regions lie at residues Gly84–Asp109 and Leu211–Glu249. A compositionally biased stretch (basic and acidic residues) spans Asn94 to Asp109. A DNA-binding region spans residues Asp109 to Glu162. Over residues Gln229 to Gln239 the composition is skewed to low complexity.

Its subcellular location is the nucleus. The polypeptide is NAC domain-containing protein 6 (NAC006) (Arabidopsis thaliana (Mouse-ear cress)).